The primary structure comprises 94 residues: Small ribosomal subunit protein uS19 (94 aa).

It belongs to the universal ribosomal protein uS19 family.

Functionally, protein S19 forms a complex with S13 that binds strongly to the 16S ribosomal RNA. The chain is Small ribosomal subunit protein uS19 from Buchnera aphidicola subsp. Cinara cedri (strain Cc).